A 146-amino-acid polypeptide reads, in one-letter code: VQWSSSERSTISTLWGKINVAEIGPQALARVLIVYPWTQRYFGKFGDLSSVAAIVGNANGAKHGRTVLQALGQAVNNMDNIKGTYAKLSQKHSEELNVDPDNFRLLGDCLTVVLATKFGAEFPPEVQAVWQKFVAVVVSALSRQYF.

The region spanning glutamine 2–phenylalanine 146 is the Globin domain. Heme b contacts are provided by histidine 63 and histidine 92.

Belongs to the globin family. As to quaternary structure, heterotetramer of two alpha chains and two beta chains. Red blood cells.

Its function is as follows. Involved in oxygen transport from the gills to the various peripheral tissues. In Conger conger (Conger eel), this protein is Hemoglobin cathodic subunit beta.